A 430-amino-acid polypeptide reads, in one-letter code: Tol-Pal system protein TolB (430 aa).

An N-terminal signal peptide occupies residues Met1–Ala21.

Belongs to the TolB family. The Tol-Pal system is composed of five core proteins: the inner membrane proteins TolA, TolQ and TolR, the periplasmic protein TolB and the outer membrane protein Pal. They form a network linking the inner and outer membranes and the peptidoglycan layer.

It is found in the periplasm. In terms of biological role, part of the Tol-Pal system, which plays a role in outer membrane invagination during cell division and is important for maintaining outer membrane integrity. TolB occupies a key intermediary position in the Tol-Pal system because it communicates directly with both membrane-embedded components, Pal in the outer membrane and TolA in the inner membrane. The chain is Tol-Pal system protein TolB from Salmonella enteritidis PT4 (strain P125109).